An 890-amino-acid polypeptide reads, in one-letter code: DNA mismatch repair protein MutS (890 aa).

Residue 646–653 (GPNMAGKS) coordinates ATP.

Belongs to the DNA mismatch repair MutS family.

Its function is as follows. This protein is involved in the repair of mismatches in DNA. It is possible that it carries out the mismatch recognition step. This protein has a weak ATPase activity. In Hyphomonas neptunium (strain ATCC 15444), this protein is DNA mismatch repair protein MutS.